Here is a 269-residue protein sequence, read N- to C-terminus: MELWTEARALKASLRGESTISLKHHQVIVSEDLSRTSSLPEDFSVECFLDFSEGQKEEEEEVVSVSSSQEQEEQEHDCVFSSQPCIFDQLPSLPDEDVEELEWVSRVVDDCSSPEVSLLLTQTHKTKPSFSRIPVKPRTKRSRNSLTGSRVWPLVSTNHQHAATEQLRKKKQETVLVFQRRCSHCGTNNTPQWRTGPVGPKTLCNACGVRFKSGRLCPEYRPADSPTFSNEIHSNLHRKVLELRKSKELGEETGEASTKSDPVKFGSKW.

A Nuclear localization signal motif is present at residues 136 to 143 (KPRTKRSR). The segment at 176 to 230 (LVFQRRCSHCGTNNTPQWRTGPVGPKTLCNACGVRFKSGRLCPEYRPADSPTFSN) adopts a GATA-type zinc-finger fold. The tract at residues 245-269 (KSKELGEETGEASTKSDPVKFGSKW) is disordered.

It belongs to the type IV zinc-finger family. Class A subfamily. As to expression, mostly expressed in roots. Also expressed in stems, flowers and leaves.

It localises to the nucleus. Transcriptional activator that specifically binds 5'-GATA-3' or 5'-GAT-3' motifs within gene promoters. May be involved in the regulation of some light-responsive genes. The chain is GATA transcription factor 3 (GATA3) from Arabidopsis thaliana (Mouse-ear cress).